The chain runs to 240 residues: Eukaryotic translation initiation factor 4E-3 (240 aa).

The interval 1–51 (MVVTDSPVSGIMADQNIDPNTTTSPSPKEKHVSAIKAISGDEKAPSKEKKN) is disordered. Positions 17-26 (IDPNTTTSPS) are enriched in polar residues. Residues 39–51 (SGDEKAPSKEKKN) are compositionally biased toward basic and acidic residues. 2 EIF4G-binding regions span residues 65–68 (HCFQ) and 75–111 (FDNP…NNIH). MRNA is bound by residues 83–88 (NQVIWG), lysine 115, and 133–134 (WE). Cysteines 138 and 176 form a disulfide. The interval 159-168 (NTLLALVGEQ) is EIF4G-binding. MRNA contacts are provided by residues 183–188 (RARGDR) and 228–232 (KTLDR).

Belongs to the eukaryotic initiation factor 4E family. EIF4F is a multi-subunit complex, the composition of which varies with external and internal environmental conditions. It is composed of at least EIF4A, EIF4E and EIF4G. EIF4E is also known to interact with other partners. In higher plants two isoforms of EIF4F have been identified, named isoform EIF4F and isoform EIF(iso)4F. Isoform EIF4F has subunits p220 and p26, whereas isoform EIF(iso)4F has subunits p82 and p28. According to the redox status, the Cys-138-Cys-176 disulfide bridge may have a role in regulating protein function by affecting its ability to bind capped mRNA.

It is found in the nucleus. It localises to the cytoplasm. In terms of biological role, component of the protein complex eIF4F, which is involved in the recognition of the mRNA cap, ATP-dependent unwinding of 5'-terminal secondary structure and recruitment of mRNA to the ribosome. Recognizes and binds the 7-methylguanosine-containing mRNA cap during an early step in the initiation of protein synthesis and facilitates ribosome binding by inducing the unwinding of the mRNAs secondary structures. The polypeptide is Eukaryotic translation initiation factor 4E-3 (Arabidopsis thaliana (Mouse-ear cress)).